We begin with the raw amino-acid sequence, 592 residues long: Aspartate--tRNA ligase (592 aa).

Glu173 provides a ligand contact to L-aspartate. Residues 197–200 (QLFK) form an aspartate region. Arg219 provides a ligand contact to L-aspartate. Residues 219–221 (RDE) and Gln228 each bind ATP. His449 is a binding site for L-aspartate. ATP is bound at residue Glu483. Arg490 is an L-aspartate binding site. An ATP-binding site is contributed by 535-538 (GLDR).

The protein belongs to the class-II aminoacyl-tRNA synthetase family. Type 1 subfamily. Homodimer.

It localises to the cytoplasm. The catalysed reaction is tRNA(Asp) + L-aspartate + ATP = L-aspartyl-tRNA(Asp) + AMP + diphosphate. In terms of biological role, catalyzes the attachment of L-aspartate to tRNA(Asp) in a two-step reaction: L-aspartate is first activated by ATP to form Asp-AMP and then transferred to the acceptor end of tRNA(Asp). This chain is Aspartate--tRNA ligase, found in Shewanella loihica (strain ATCC BAA-1088 / PV-4).